We begin with the raw amino-acid sequence, 385 residues long: Probable tRNA sulfurtransferase (385 aa).

Positions Asp-57 to Lys-160 constitute a THUMP domain. ATP-binding positions include Met-180–Leu-181, Tyr-205–Tyr-206, Arg-262, Gly-284, and Gln-293.

It belongs to the ThiI family.

Its subcellular location is the cytoplasm. It carries out the reaction [ThiI sulfur-carrier protein]-S-sulfanyl-L-cysteine + a uridine in tRNA + 2 reduced [2Fe-2S]-[ferredoxin] + ATP + H(+) = [ThiI sulfur-carrier protein]-L-cysteine + a 4-thiouridine in tRNA + 2 oxidized [2Fe-2S]-[ferredoxin] + AMP + diphosphate. The enzyme catalyses [ThiS sulfur-carrier protein]-C-terminal Gly-Gly-AMP + S-sulfanyl-L-cysteinyl-[cysteine desulfurase] + AH2 = [ThiS sulfur-carrier protein]-C-terminal-Gly-aminoethanethioate + L-cysteinyl-[cysteine desulfurase] + A + AMP + 2 H(+). It participates in cofactor biosynthesis; thiamine diphosphate biosynthesis. Functionally, catalyzes the ATP-dependent transfer of a sulfur to tRNA to produce 4-thiouridine in position 8 of tRNAs, which functions as a near-UV photosensor. Also catalyzes the transfer of sulfur to the sulfur carrier protein ThiS, forming ThiS-thiocarboxylate. This is a step in the synthesis of thiazole, in the thiamine biosynthesis pathway. The sulfur is donated as persulfide by IscS. In Clostridium perfringens (strain SM101 / Type A), this protein is Probable tRNA sulfurtransferase.